The sequence spans 350 residues: Protein O-mannose kinase (350 aa).

Position 1 is an N-acetylmethionine (Met-1). The Cytoplasmic portion of the chain corresponds to 1–20 (MEKQPQNSRRGLAPREVPPA). The chain crosses the membrane as a helical; Signal-anchor for type II membrane protein span at residues 21 to 43 (VGLLLIMALMNTLLYLCLDHFFI). Over 44 to 350 (APRQSTVDPT…AMMSQAREML (307 aa)) the chain is Lumenal. The region spanning 81–350 (VRQLKRVGEG…AMMSQAREML (270 aa)) is the Protein kinase domain. Asn-165, Asn-220, and Asn-235 each carry an N-linked (GlcNAc...) asparagine glycan.

Belongs to the protein kinase superfamily. Ser/Thr protein kinase family. STKL subfamily. As to expression, highest expression is observed in brain, skeletal muscle, kidney and heart in fetal and adult tissues.

It is found in the endoplasmic reticulum membrane. The catalysed reaction is 3-O-[beta-D-GalNAc-(1-&gt;3)-beta-D-GlcNAc-(1-&gt;4)-alpha-D-Man]-L-Thr-[protein] + ATP = 3-O-[beta-D-GalNAc-(1-&gt;3)-beta-D-GlcNAc-(1-&gt;4)-(O-6-P-alpha-D-Man)]-Thr-[protein] + ADP + H(+). Functionally, protein O-mannose kinase that specifically mediates phosphorylation at the 6-position of an O-mannose of the trisaccharide (N-acetylgalactosamine (GalNAc)-beta-1,3-N-acetylglucosamine (GlcNAc)-beta-1,4-mannose) to generate phosphorylated O-mannosyl trisaccharide (N-acetylgalactosamine-beta-1,3-N-acetylglucosamine-beta-1,4-(phosphate-6-)mannose). Phosphorylated O-mannosyl trisaccharide is a carbohydrate structure present in alpha-dystroglycan (DAG1), which is required for binding laminin G-like domain-containing extracellular proteins with high affinity. Only shows kinase activity when the GalNAc-beta-3-GlcNAc-beta-terminus is linked to the 4-position of O-mannose, suggesting that this disaccharide serves as the substrate recognition motif. The chain is Protein O-mannose kinase (POMK) from Homo sapiens (Human).